We begin with the raw amino-acid sequence, 486 residues long: Cytochrome P450 monooxygenase 1 (486 aa).

The N-terminal stretch at 1–21 is a signal peptide; it reads MSHFLPTLILTSLTLVAYVLA. A glycan (N-linked (GlcNAc...) asparagine) is linked at Asn-346. Position 430 (Cys-430) interacts with heme. The N-linked (GlcNAc...) asparagine glycan is linked to Asn-434.

This sequence belongs to the cytochrome P450 family. Heme is required as a cofactor.

It functions in the pathway mycotoxin biosynthesis. In terms of biological role, cytochrome P450 monooxygenase; part of the gene cluster that mediates the biosynthesis of aphidicolin, a specific inhibitor of eukaryotic DNA synthesis and DNA polymerase alpha. The geranylgeranyl pyrophosphate synthase GGS is required for supplying a sufficient amount of geranylgeranyl diphosphate (GGDP), the general precursor of diterpenes. The diterpene synthase ACS then catalyzes the conversion of geranylgeranyl diphosphate to aphidicolan-16-beta-ol via the intermediate syn-copalyldiphosphate (syn-CDP). In addition to aphidicolan-16-beta-ol, the enzyme also produces low levels of amphidicol-15-ene and amphidicol-16-ene. The cytochrome P450 monooxygenase P450-2 then catalyzes the two-step hydroxylation from aphidicolan-16-beta-ol to 3-deoxyaphidicolin via a 17,3-deoxyaphidicolin intermediate. Finally, the cytochrome P450 monooxygenase P450-1 converts 3-deoxyaphidicolin to aphidicolin. The protein is Cytochrome P450 monooxygenase 1 (PbP450-1) of Neocamarosporium betae (Beet black rot fungus).